A 136-amino-acid chain; its full sequence is Ribosome-binding factor A (136 aa).

The protein belongs to the RbfA family. Monomer. Binds 30S ribosomal subunits, but not 50S ribosomal subunits or 70S ribosomes.

It is found in the cytoplasm. In terms of biological role, one of several proteins that assist in the late maturation steps of the functional core of the 30S ribosomal subunit. Associates with free 30S ribosomal subunits (but not with 30S subunits that are part of 70S ribosomes or polysomes). Required for efficient processing of 16S rRNA. May interact with the 5'-terminal helix region of 16S rRNA. This is Ribosome-binding factor A from Rhizobium etli (strain ATCC 51251 / DSM 11541 / JCM 21823 / NBRC 15573 / CFN 42).